Here is a 241-residue protein sequence, read N- to C-terminus: Small ribosomal subunit protein uS2 (241 aa).

This sequence belongs to the universal ribosomal protein uS2 family.

The chain is Small ribosomal subunit protein uS2 from Klebsiella pneumoniae (strain 342).